Consider the following 345-residue polypeptide: MKLQGSRMWLCPRTRLPVGASALGFLILCWLYVFPGYRLPGHKEMVREVLRFGPGWRKNRTEMDSFRKLLQDCCDPPHLFSLTKVNTPLGENLWFDGEFFHSLTIDNSTRSLFPQDTPFKLPLKRCSVVGNGGILKNSRCGEQIDEADFVMRCNLPPLSREYTEDVGTRTQLVTVNPSIIDKRYQNLLWSRKSFVENLRVYQQSYVYMPAFSTKRGTDPSLRVYYTLADFGTNQTVLFANPNFLRNVGKFWKSRGIHSKRLSTGLFMVSAALSLCEEVTIYGFWPFQMDLGGRYISHHYYDNTLPLSGVHAMPEEFLQLWLLHKSGVLQMQLDQCKKDVSSQKPH.

Topologically, residues methionine 1 to arginine 15 are cytoplasmic. A helical; Signal-anchor for type II membrane protein membrane pass occupies residues leucine 16 to glycine 36. The Lumenal portion of the chain corresponds to tyrosine 37–histidine 345. Asparagine 59 and asparagine 107 each carry an N-linked (GlcNAc...) asparagine glycan. 2 cysteine pairs are disulfide-bonded: cysteine 126–cysteine 275 and cysteine 140–cysteine 335. Positions 131 and 154 each coordinate CMP-N-acetyl-beta-neuraminate. Substrate is bound by residues asparagine 154 and asparagine 176–serine 178. An N-linked (GlcNAc...) asparagine glycan is attached at asparagine 233. Serine 262, threonine 263, glycine 264, tryptophan 284, and histidine 298 together coordinate CMP-N-acetyl-beta-neuraminate. Serine 262–glycine 264 provides a ligand contact to substrate. Histidine 310 serves as the catalytic Proton donor/acceptor.

It belongs to the glycosyltransferase 29 family.

Its subcellular location is the golgi apparatus membrane. The catalysed reaction is an N-acetyl-alpha-neuraminyl-(2-&gt;3)-beta-D-galactosyl derivative + CMP-N-acetyl-beta-neuraminate = an N-acetyl-alpha-neuraminyl-(2-&gt;8)-N-acetyl-alpha-neuraminyl-(2-&gt;3)-beta-D-galactosyl derivative + CMP + H(+). The enzyme catalyses a ganglioside GM3 (d18:1(4E)) + CMP-N-acetyl-beta-neuraminate = a ganglioside GD3 (d18:1(4E)) + CMP + H(+). It catalyses the reaction a ganglioside GD3 (d18:1(4E)) + CMP-N-acetyl-beta-neuraminate = a ganglioside GT3 (d18:1(4E)) + CMP + H(+). It carries out the reaction a ganglioside GD1a (d18:1(4E)) + CMP-N-acetyl-beta-neuraminate = a ganglioside GT1a (d18:1(4E)) + CMP + H(+). The catalysed reaction is a ganglioside GT1b (d18:1(4E)) + CMP-N-acetyl-beta-neuraminate = a ganglioside GQ1b (d18:1(4E)) + CMP + H(+). The enzyme catalyses a ganglioside GM1b (d18:1(4E)) + CMP-N-acetyl-beta-neuraminate = a ganglioside GD1c (d18:1(4E)) + CMP + H(+). It catalyses the reaction a ganglioside GD3 + CMP-N-acetyl-beta-neuraminate = a ganglioside GT3 + CMP + H(+). It carries out the reaction [alpha-N-acetylneuraminyl-(2-&gt;8)](n)-alpha-N-acetylneuraminyl-(2-&gt;8)-alpha-N-acetylneuraminyl-(2-&gt;3)-beta-D-galactosyl-(1-&gt;4)-beta-D-glucosyl-(1&lt;-&gt;1)-ceramide + CMP-N-acetyl-beta-neuraminate = [alpha-N-acetylneuraminyl-(2-&gt;8)](n+1)-alpha-N-acetylneuraminyl-(2-&gt;8)-alpha-N-acetylneuraminyl-(2-&gt;3)-beta-D-galactosyl-(1-&gt;4)-beta-D-glucosyl-(1&lt;-&gt;1)-ceramide + CMP + H(+). It functions in the pathway protein modification; protein glycosylation. Its pathway is lipid metabolism; sphingolipid metabolism. Its function is as follows. Catalyzes the addition of sialic acid in alpha 2,8-linkage to the sialic acid moiety of the ganglioside GM3 to form ganglioside GD3; gangliosides are a subfamily of complex glycosphingolipds that contain one or more residues of sialic acid. Glycosphingolipids are required for convergence extension movements during early development. Can catalyze the addition of a second alpha-2,8- sialic acid to GD3 to form GT3. Can use GM1b, GD1a and GT1b as acceptor substrates to synthesize GD1c, GT1a and GQ1b respectively. The polypeptide is Alpha-N-acetylneuraminide alpha-2,8-sialyltransferase (Xenopus tropicalis (Western clawed frog)).